The chain runs to 235 residues: Purine nucleoside phosphorylase DeoD-type (235 aa).

His4 is a binding site for a purine D-ribonucleoside. Phosphate is bound by residues Gly20, Arg24, Arg43, and 87-90 (RVGT). Residues 179–181 (EME) and 203–204 (SD) contribute to the a purine D-ribonucleoside site. The Proton donor role is filled by Asp204.

It belongs to the PNP/UDP phosphorylase family. Homohexamer; trimer of homodimers.

The enzyme catalyses a purine D-ribonucleoside + phosphate = a purine nucleobase + alpha-D-ribose 1-phosphate. It catalyses the reaction a purine 2'-deoxy-D-ribonucleoside + phosphate = a purine nucleobase + 2-deoxy-alpha-D-ribose 1-phosphate. In terms of biological role, catalyzes the reversible phosphorolytic breakdown of the N-glycosidic bond in the beta-(deoxy)ribonucleoside molecules, with the formation of the corresponding free purine bases and pentose-1-phosphate. In Brevibacillus brevis (strain 47 / JCM 6285 / NBRC 100599), this protein is Purine nucleoside phosphorylase DeoD-type.